The primary structure comprises 541 residues: Berberine bridge enzyme-like 24 (541 aa).

A signal peptide spans 1 to 32 (MGNSKPLPTISCIIVSVLYFSFYCITPTSSSA). A disulfide bond links cysteine 41 and cysteine 105. An N-linked (GlcNAc...) asparagine glycan is attached at asparagine 62. The FAD-binding PCMH-type domain occupies 83-259 (SMPKPGFIFR…LAWKIKLVPV (177 aa)). The segment at residues 120–184 (HDFEALSYVS…KIHGFPAGLC (65 aa)) is a cross-link (6-(S-cysteinyl)-8alpha-(pros-histidyl)-FAD (His-Cys)). Residues asparagine 309, asparagine 408, and asparagine 435 are each glycosylated (N-linked (GlcNAc...) asparagine).

It belongs to the oxygen-dependent FAD-linked oxidoreductase family. The cofactor is FAD. Post-translationally, the FAD cofactor is bound via a bicovalent 6-S-cysteinyl, 8alpha-N1-histidyl FAD linkage.

It localises to the secreted. It is found in the cell wall. The polypeptide is Berberine bridge enzyme-like 24 (Arabidopsis thaliana (Mouse-ear cress)).